Here is a 64-residue protein sequence, read N- to C-terminus: Beta-toxin Tf1 (64 aa).

The 62-residue stretch at 1 to 62 folds into the LCN-type CS-alpha/beta domain; the sequence is KEGYLMDHEG…VWERATNRCG (62 aa). 4 disulfides stabilise this stretch: Cys11–Cys61, Cys15–Cys37, Cys23–Cys42, and Cys27–Cys44. Cys61 carries the post-translational modification Cysteine amide.

The protein belongs to the long (4 C-C) scorpion toxin superfamily. Sodium channel inhibitor family. Beta subfamily. As to expression, expressed by the venom gland.

It is found in the secreted. In terms of biological role, beta toxins bind voltage-independently at site-4 of sodium channels (Nav) and shift the voltage of activation toward more negative potentials thereby affecting sodium channel activation and promoting spontaneous and repetitive firing. The chain is Beta-toxin Tf1 from Tityus fasciolatus (Central Brazilian scorpion).